The sequence spans 487 residues: Probable nuclear hormone receptor HR3 (487 aa).

The nuclear receptor DNA-binding region spans 48–123 (IIPCKVCGDK…LGMSRDAVKF (76 aa)). 2 consecutive NR C4-type zinc fingers follow at residues 51 to 71 (CKVC…CEGC) and 87 to 111 (CPRN…LQKC). A disordered region spans residues 145-176 (MRAQSDAAPDSSVYDTQTPSSSDQLHHNNYNS). The segment covering 157 to 167 (VYDTQTPSSSD) has biased composition (polar residues). An NR LBD domain is found at 237-480 (INDVLIKTLA…PALYKELFSI (244 aa)).

It belongs to the nuclear hormone receptor family. NR1 subfamily.

It is found in the nucleus. Its function is as follows. Putative receptor whose ligand is not yet known. This is Probable nuclear hormone receptor HR3 from Drosophila melanogaster (Fruit fly).